The following is a 20-amino-acid chain: Equinatoxin-3 (20 aa).

A plays an important role in the hemolytic activity region spans residues 3–12; sequence AVAGAIIKGA. The interval 11–20 is N-terminal region; that stretch reads GAALTFNVLQ.

Belongs to the actinoporin family. Sea anemone subfamily. Octamer or nonamer in membranes. Monomer in the soluble state.

It is found in the secreted. The protein resides in the nematocyst. It localises to the target cell membrane. Functionally, pore-forming protein that forms cations-selective hydrophilic pores of around 1 nm and causes cardiac stimulation and cytolysis. Pore formation is a multi-step process that involves specific recognition of membrane sphingomyelin (but neither cholesterol nor phosphatidylcholine) using aromatic rich region and adjacent phosphocholine (POC) binding site, firm binding to the membrane (mainly driven by hydrophobic interactions) accompanied by the transfer of the N-terminal region to the lipid-water interface and finally pore formation after oligomerization of monomers. Cytolytic effects include red blood cells hemolysis, platelet aggregation and lysis, cytotoxic and cytostatic effects on fibroblasts. Lethality in mammals has been ascribed to severe vasospasm of coronary vessels, cardiac arrhythmia, and inotropic effects. This chain is Equinatoxin-3, found in Actinia equina (Beadlet anemone).